Reading from the N-terminus, the 148-residue chain is Large ribosomal subunit protein uL15 (148 aa).

Positions 1 to 10 (MQLHNLEYKK) are enriched in basic and acidic residues. The disordered stretch occupies residues 1-42 (MQLHNLEYKKGSRNHKEKRVGRGHGSGLGKTSGRGQDGQKAR). Basic residues predominate over residues 11-22 (GSRNHKEKRVGR). Residues 23-36 (GHGSGLGKTSGRGQ) show a composition bias toward gly residues.

The protein belongs to the universal ribosomal protein uL15 family. As to quaternary structure, part of the 50S ribosomal subunit.

In terms of biological role, binds to the 23S rRNA. In Ureaplasma parvum serovar 3 (strain ATCC 27815 / 27 / NCTC 11736), this protein is Large ribosomal subunit protein uL15.